Here is a 382-residue protein sequence, read N- to C-terminus: Proton extrusion protein PxcA (382 aa).

Helical transmembrane passes span 162–182, 257–277, 305–325, and 340–360; these read ILLL…TYIV, AIKN…VCLV, IILF…TVLL, and FILL…KYWI.

It belongs to the CemA family.

It localises to the cell inner membrane. In terms of biological role, required for H(+) efflux immediately after light irradiation to form a rapid H(+) concentration gradient across the thylakoid membranes. Together with PxcL, contributes to transient H(+) uptake following dark to light transition. The protein is Proton extrusion protein PxcA of Parasynechococcus marenigrum (strain WH8102).